Reading from the N-terminus, the 711-residue chain is Amyloid beta precursor protein binding family B member 1 (711 aa).

At Ser-135 the chain carries Phosphoserine. 3 disordered regions span residues 140–257, 277–300, and 321–364; these read NTQG…SDLP, GTTQ…EESQ, and EPSE…QRNA. Positions 156 to 174 are enriched in acidic residues; that stretch reads EVEEEDEDEEEEDEEEEDL. Lys-205 bears the N6-acetyllysine mark. Residues 224 to 235 are compositionally biased toward polar residues; it reads SWATLSQGSPSY. The 33-residue stretch at 254-286 folds into the WW domain; sequence SDLPAGWMRVQDTSGTYYWHIPTGTTQWEPPGR. Over residues 288–300 the composition is skewed to polar residues; the sequence is SPSQGNSPQEESQ. 2 consecutive PID domains span residues 365-533 and 538-700; these read NPGI…QVEF and NELV…LWGS. Ser-460 bears the Phosphoserine; by PKC mark. Ser-518 bears the Phosphoserine mark. The residue at position 548 (Tyr-548) is a Phosphotyrosine; by ABL1. At Ser-611 the chain carries Phosphoserine; by SGK1. Lys-702 is subject to N6-acetyllysine.

As to quaternary structure, component of a complex, at least composed of APBB1, RASD1/DEXRAS1 and APP. Interacts (via PID domain 2) with APP (with the intracellular domain of the amyloid-beta precursor protein). Interacts (via PID domain 2) with RASD1/DEXRAS1; impairs the transcription activation activity. Interacts (via PID domain 1) with KAT5/TIP60. Interacts (via the WW domain) with the proline-rich region of APBB1IP. Interacts with TSHZ1 and TSHZ2. Interacts (via the WW domain) with histone H2AX (when phosphorylated on 'Tyr-142') and the proline-rich region of ENAH. Interacts with MAPK8. Interacts (via PID domain 1) with TSHZ3 (via homeobox domain). Interacts with SET. Found in a trimeric complex with HDAC1 and TSHZ3; the interaction between HDAC1 and APBB1 is mediated by TSHZ3. Interacts (via WWW domain) with NEK6. Interacts (via WWW domain) with ABL1. Interacts with RNF157. Interacts with ARF6. Post-translationally, polyubiquitination by RNF157 leads to degradation by the proteasome. Phosphorylation at Ser-611 by SGK1 promotes its localization to the nucleus. Phosphorylated following nuclear translocation. Phosphorylation at Tyr-547 by ABL1 enhances transcriptional activation activity and reduces the affinity for RASD1/DEXRAS1. Phosphorylated at Ser-460 by PKC upon insulin activation. In terms of processing, acetylation at Lys-205 and Lys-702 by KAT5 promotes its transcription activator activity. In terms of tissue distribution, brain, not in liver, very low in other tissues. The long (neuron-specific) form is expressed only in brain.

The protein resides in the cell membrane. It localises to the cytoplasm. The protein localises to the nucleus. It is found in the cell projection. Its subcellular location is the growth cone. The protein resides in the nucleus speckle. In terms of biological role, transcription coregulator that can have both coactivator and corepressor functions. Adapter protein that forms a transcriptionally active complex with the gamma-secretase-derived amyloid precursor protein (APP) intracellular domain. Plays a central role in the response to DNA damage by translocating to the nucleus and inducing apoptosis. May act by specifically recognizing and binding histone H2AX phosphorylated on 'Tyr-142' (H2AXY142ph) at double-strand breaks (DSBs), recruiting other pro-apoptosis factors such as MAPK8/JNK1. Required for histone H4 acetylation at double-strand breaks (DSBs). Its ability to specifically bind modified histones and chromatin modifying enzymes such as KAT5/TIP60, probably explains its transcription activation activity. Functions in association with TSHZ3, SET and HDAC factors as a transcriptional repressor, that inhibits the expression of CASP4. Associates with chromatin in a region surrounding the CASP4 transcriptional start site(s). Involved in hippocampal neurite branching and neuromuscular junction formation, as a result plays a role in spatial memory functioning. Plays a role in the maintenance of lens transparency. May play a role in muscle cell strength. Acts as a molecular adapter that functions in neurite outgrowth by activating the RAC1-ARF6 axis upon insulin treatment. The polypeptide is Amyloid beta precursor protein binding family B member 1 (Rattus norvegicus (Rat)).